Here is a 132-residue protein sequence, read N- to C-terminus: Small ribosomal subunit protein uS8 (132 aa).

Belongs to the universal ribosomal protein uS8 family. As to quaternary structure, part of the 30S ribosomal subunit. Contacts proteins S5 and S12.

One of the primary rRNA binding proteins, it binds directly to 16S rRNA central domain where it helps coordinate assembly of the platform of the 30S subunit. The sequence is that of Small ribosomal subunit protein uS8 from Borrelia hermsii (strain HS1 / DAH).